Here is a 174-residue protein sequence, read N- to C-terminus: RNA pyrophosphohydrolase (174 aa).

The 144-residue stretch at 6-149 (GYRPNVGIIL…KRDVYLGALK (144 aa)) folds into the Nudix hydrolase domain. The Nudix box motif lies at 38-59 (GGIKPGESPETAMYRELYEEVG).

The protein belongs to the Nudix hydrolase family. RppH subfamily. A divalent metal cation serves as cofactor.

Functionally, accelerates the degradation of transcripts by removing pyrophosphate from the 5'-end of triphosphorylated RNA, leading to a more labile monophosphorylated state that can stimulate subsequent ribonuclease cleavage. The polypeptide is RNA pyrophosphohydrolase (Neisseria meningitidis serogroup B (strain ATCC BAA-335 / MC58)).